The following is a 384-amino-acid chain: Succinyl-diaminopimelate desuccinylase (384 aa).

H71 serves as a coordination point for Zn(2+). D73 is a catalytic residue. Residue D104 participates in Zn(2+) binding. The Proton acceptor role is filled by E139. Zn(2+)-binding residues include E140, E168, and H357.

It belongs to the peptidase M20A family. DapE subfamily. Homodimer. Zn(2+) serves as cofactor. Co(2+) is required as a cofactor.

The catalysed reaction is N-succinyl-(2S,6S)-2,6-diaminopimelate + H2O = (2S,6S)-2,6-diaminopimelate + succinate. Its pathway is amino-acid biosynthesis; L-lysine biosynthesis via DAP pathway; LL-2,6-diaminopimelate from (S)-tetrahydrodipicolinate (succinylase route): step 3/3. Its function is as follows. Catalyzes the hydrolysis of N-succinyl-L,L-diaminopimelic acid (SDAP), forming succinate and LL-2,6-diaminopimelate (DAP), an intermediate involved in the bacterial biosynthesis of lysine and meso-diaminopimelic acid, an essential component of bacterial cell walls. This Afipia carboxidovorans (strain ATCC 49405 / DSM 1227 / KCTC 32145 / OM5) (Oligotropha carboxidovorans) protein is Succinyl-diaminopimelate desuccinylase.